Here is a 254-residue protein sequence, read N- to C-terminus: Zinc finger FYVE domain-containing protein 21 (254 aa).

The FYVE-type zinc-finger motif lies at 44–104; the sequence is DKECPRCMQC…QCAGCAPVSR (61 aa). Positions 50, 53, 66, 69, 74, 77, 96, and 99 each coordinate Zn(2+). The PH-like stretch occupies residues 107–254; it reads ADFYDRQLKL…AKLLYESRDQ (148 aa).

As to quaternary structure, interacts with PTK2/FAK1.

The protein localises to the cell junction. It localises to the focal adhesion. Its subcellular location is the cytoplasmic vesicle. The protein resides in the endosome. Plays a role in cell adhesion, and thereby in cell motility which requires repeated formation and disassembly of focal adhesions. Regulates microtubule-induced PTK2/FAK1 dephosphorylation, an event important for focal adhesion disassembly, as well as integrin beta-1/ITGB1 cell surface expression. This is Zinc finger FYVE domain-containing protein 21 (ZFYVE21) from Bos taurus (Bovine).